A 260-amino-acid polypeptide reads, in one-letter code: Thiazole synthase (260 aa).

Lys102 acts as the Schiff-base intermediate with DXP in catalysis. 1-deoxy-D-xylulose 5-phosphate contacts are provided by residues Gly163, Ala189–Gly190, and Asn211–Thr212.

Belongs to the ThiG family. Homotetramer. Forms heterodimers with either ThiH or ThiS.

The protein localises to the cytoplasm. It carries out the reaction [ThiS sulfur-carrier protein]-C-terminal-Gly-aminoethanethioate + 2-iminoacetate + 1-deoxy-D-xylulose 5-phosphate = [ThiS sulfur-carrier protein]-C-terminal Gly-Gly + 2-[(2R,5Z)-2-carboxy-4-methylthiazol-5(2H)-ylidene]ethyl phosphate + 2 H2O + H(+). It participates in cofactor biosynthesis; thiamine diphosphate biosynthesis. Catalyzes the rearrangement of 1-deoxy-D-xylulose 5-phosphate (DXP) to produce the thiazole phosphate moiety of thiamine. Sulfur is provided by the thiocarboxylate moiety of the carrier protein ThiS. In vitro, sulfur can be provided by H(2)S. The polypeptide is Thiazole synthase (Geobacter sulfurreducens (strain ATCC 51573 / DSM 12127 / PCA)).